A 707-amino-acid polypeptide reads, in one-letter code: Polyribonucleotide nucleotidyltransferase (707 aa).

Mg(2+) is bound by residues Asp-484 and Asp-490. The region spanning Pro-551–Ile-610 is the KH domain. Residues Gly-620–Lys-688 form the S1 motif domain. Residues Lys-688–Lys-707 form a disordered region. Over residues Asp-698–Lys-707 the composition is skewed to basic and acidic residues.

This sequence belongs to the polyribonucleotide nucleotidyltransferase family. It depends on Mg(2+) as a cofactor.

It is found in the cytoplasm. The catalysed reaction is RNA(n+1) + phosphate = RNA(n) + a ribonucleoside 5'-diphosphate. Its function is as follows. Involved in mRNA degradation. Catalyzes the phosphorolysis of single-stranded polyribonucleotides processively in the 3'- to 5'-direction. This chain is Polyribonucleotide nucleotidyltransferase, found in Caldanaerobacter subterraneus subsp. tengcongensis (strain DSM 15242 / JCM 11007 / NBRC 100824 / MB4) (Thermoanaerobacter tengcongensis).